The sequence spans 391 residues: Casein kinase II subunit alpha (391 aa).

An interaction with beta subunit region spans residues 36–41 (QDDYQL). Positions 39–324 (YQLVRKLGRG…AREAMEHPYF (286 aa)) constitute a Protein kinase domain. Residues 45–53 (LGRGKYSEV) and Lys68 contribute to the ATP site. Asp156 acts as the Proton acceptor in catalysis. Thr344 and Thr360 each carry phosphothreonine; by CDK1. Residues Ser362 and Ser370 each carry the phosphoserine; by CDK1 modification.

It belongs to the protein kinase superfamily. Ser/Thr protein kinase family. CK2 subfamily. In terms of assembly, heterotetramer composed of two catalytic subunits (alpha chain and/or alpha' chain) and two regulatory subunits (beta chains). The tetramer can exist as a combination of 2 alpha/2 beta, 2 alpha'/2 beta or 1 alpha/1 alpha'/2 beta subunits. Also part of a CK2-SPT16-SSRP1 complex composed of SSRP1, SUPT16H, CSNK2A1, CSNK2A2 and CSNK2B, which forms following UV irradiation. Interacts with RNPS1. Interacts with SNAI1. Interacts with PML. Interacts with CCAR2. Interacts with HIRIP3. In terms of processing, phosphorylated at Thr-344, Thr-360, Ser-362 and Ser-370 by CDK1 in prophase and metaphase and dephosphorylated during anaphase. Phosphorylation does not directly affect casein kinase 2 activity, but may contribute to its regulation by forming binding sites for interacting proteins and/or targeting it to different compartments.

The protein resides in the nucleus. It carries out the reaction L-seryl-[protein] + ATP = O-phospho-L-seryl-[protein] + ADP + H(+). The catalysed reaction is L-threonyl-[protein] + ATP = O-phospho-L-threonyl-[protein] + ADP + H(+). With respect to regulation, constitutively active protein kinase whose activity is not directly affected by phosphorylation. Seems to be regulated by level of expression and localization. Catalytic subunit of a constitutively active serine/threonine-protein kinase complex that phosphorylates a large number of substrates containing acidic residues C-terminal to the phosphorylated serine or threonine. Regulates numerous cellular processes, such as cell cycle progression, apoptosis and transcription, as well as viral infection. May act as a regulatory node which integrates and coordinates numerous signals leading to an appropriate cellular response. During mitosis, functions as a component of the p53/TP53-dependent spindle assembly checkpoint (SAC) that maintains cyclin-B-CDK1 activity and G2 arrest in response to spindle damage. Also required for p53/TP53-mediated apoptosis, phosphorylating 'Ser-392' of p53/TP53 following UV irradiation. Phosphorylates a number of DNA repair proteins in response to DNA damage, such as MDC1, MRE11, RAD9A, RAD51 and HTATSF1, promoting their recruitment to DNA damage sites. Can also negatively regulate apoptosis. Phosphorylates the caspases CASP9 and CASP2 and the apoptotic regulator NOL3. Phosphorylation protects CASP9 from cleavage and activation by CASP8, and inhibits the dimerization of CASP2 and activation of CASP8. Phosphorylates YY1, protecting YY1 from cleavage by CASP7 during apoptosis. Regulates transcription by direct phosphorylation of RNA polymerases I, II, III and IV. Also phosphorylates and regulates numerous transcription factors including NF-kappa-B, STAT1, CREB1, IRF1, IRF2, ATF1, ATF4, SRF, MAX, JUN, FOS, MYC and MYB. Phosphorylates Hsp90 and its co-chaperones FKBP4 and CDC37, which is essential for chaperone function. Mediates sequential phosphorylation of FNIP1, promoting its gradual interaction with Hsp90, leading to activate both kinase and non-kinase client proteins of Hsp90. Regulates Wnt signaling by phosphorylating CTNNB1 and the transcription factor LEF1. Acts as an ectokinase that phosphorylates several extracellular proteins. Phosphorylates PML at 'Ser-565' and primes it for ubiquitin-mediated degradation. Plays an important role in the circadian clock function by phosphorylating BMAL1 at 'Ser-90' which is pivotal for its interaction with CLOCK and which controls CLOCK nuclear entry. Phosphorylates FMR1, promoting FMR1-dependent formation of a membraneless compartment. May phosphorylate histone H2A on 'Ser-1'. In Rattus norvegicus (Rat), this protein is Casein kinase II subunit alpha (Csnk2a1).